We begin with the raw amino-acid sequence, 45 residues long: Cytochrome b559 subunit beta (45 aa).

The chain crosses the membrane as a helical span at residues 20 to 36 (WLALHTLGVPTVFFLGA). His24 is a heme binding site.

This sequence belongs to the PsbE/PsbF family. In terms of assembly, heterodimer of an alpha subunit and a beta subunit. PSII is composed of 1 copy each of membrane proteins PsbA, PsbB, PsbC, PsbD, PsbE, PsbF, PsbH, PsbI, PsbJ, PsbK, PsbL, PsbM, PsbT, PsbX, PsbY, PsbZ, Psb30/Ycf12, peripheral proteins PsbO, CyanoQ (PsbQ), PsbU, PsbV and a large number of cofactors. It forms dimeric complexes. It depends on heme b as a cofactor.

The protein localises to the cellular thylakoid membrane. Its function is as follows. This b-type cytochrome is tightly associated with the reaction center of photosystem II (PSII). PSII is a light-driven water:plastoquinone oxidoreductase that uses light energy to abstract electrons from H(2)O, generating O(2) and a proton gradient subsequently used for ATP formation. It consists of a core antenna complex that captures photons, and an electron transfer chain that converts photonic excitation into a charge separation. In Parasynechococcus marenigrum (strain WH8102), this protein is Cytochrome b559 subunit beta.